The chain runs to 238 residues: UDP-2,3-diacylglucosamine hydrolase (238 aa).

The Mn(2+) site is built by D8, H10, D41, N78, and H113. A substrate-binding site is contributed by 78 to 79; that stretch reads NR. D121, S159, N163, K166, and H194 together coordinate substrate. Positions 194 and 196 each coordinate Mn(2+).

Belongs to the LpxH family. Mn(2+) serves as cofactor.

The protein resides in the cell inner membrane. The enzyme catalyses UDP-2-N,3-O-bis[(3R)-3-hydroxytetradecanoyl]-alpha-D-glucosamine + H2O = 2-N,3-O-bis[(3R)-3-hydroxytetradecanoyl]-alpha-D-glucosaminyl 1-phosphate + UMP + 2 H(+). It functions in the pathway glycolipid biosynthesis; lipid IV(A) biosynthesis; lipid IV(A) from (3R)-3-hydroxytetradecanoyl-[acyl-carrier-protein] and UDP-N-acetyl-alpha-D-glucosamine: step 4/6. Its function is as follows. Hydrolyzes the pyrophosphate bond of UDP-2,3-diacylglucosamine to yield 2,3-diacylglucosamine 1-phosphate (lipid X) and UMP by catalyzing the attack of water at the alpha-P atom. Involved in the biosynthesis of lipid A, a phosphorylated glycolipid that anchors the lipopolysaccharide to the outer membrane of the cell. The sequence is that of UDP-2,3-diacylglucosamine hydrolase from Shewanella halifaxensis (strain HAW-EB4).